We begin with the raw amino-acid sequence, 361 residues long: 3-dehydroquinate synthase (361 aa).

Residues N41, 70 to 75 (DGEQYK), 104 to 108 (GVIGD), 128 to 129 (TT), K141, K150, 150 to 151 (KN), and 168 to 171 (CLTT) contribute to the NAD(+) site. Positions 183, 246, and 263 each coordinate Zn(2+).

Belongs to the sugar phosphate cyclases superfamily. Dehydroquinate synthase family. NAD(+) is required as a cofactor. The cofactor is Co(2+). Zn(2+) serves as cofactor.

It localises to the cytoplasm. The catalysed reaction is 7-phospho-2-dehydro-3-deoxy-D-arabino-heptonate = 3-dehydroquinate + phosphate. It functions in the pathway metabolic intermediate biosynthesis; chorismate biosynthesis; chorismate from D-erythrose 4-phosphate and phosphoenolpyruvate: step 2/7. Catalyzes the conversion of 3-deoxy-D-arabino-heptulosonate 7-phosphate (DAHP) to dehydroquinate (DHQ). The chain is 3-dehydroquinate synthase from Vibrio cholerae serotype O1 (strain ATCC 39315 / El Tor Inaba N16961).